The primary structure comprises 103 residues: Small ribosomal subunit protein uS10 (103 aa).

It belongs to the universal ribosomal protein uS10 family. In terms of assembly, part of the 30S ribosomal subunit.

Its function is as follows. Involved in the binding of tRNA to the ribosomes. This is Small ribosomal subunit protein uS10 from Neisseria gonorrhoeae (strain NCCP11945).